Here is a 359-residue protein sequence, read N- to C-terminus: S-adenosylmethionine:tRNA ribosyltransferase-isomerase (359 aa).

Belongs to the QueA family. Monomer.

It localises to the cytoplasm. It catalyses the reaction 7-aminomethyl-7-carbaguanosine(34) in tRNA + S-adenosyl-L-methionine = epoxyqueuosine(34) in tRNA + adenine + L-methionine + 2 H(+). Its pathway is tRNA modification; tRNA-queuosine biosynthesis. In terms of biological role, transfers and isomerizes the ribose moiety from AdoMet to the 7-aminomethyl group of 7-deazaguanine (preQ1-tRNA) to give epoxyqueuosine (oQ-tRNA). The sequence is that of S-adenosylmethionine:tRNA ribosyltransferase-isomerase from Synechococcus elongatus (strain ATCC 33912 / PCC 7942 / FACHB-805) (Anacystis nidulans R2).